The chain runs to 668 residues: Threonine--tRNA ligase (668 aa).

Residues 1–61 (MSDLKIALTH…ADGDQVEPVA (61 aa)) enclose the TGS domain. The interval 265–564 (DHRKLGRDLD…LVEHYAGAFP (300 aa)) is catalytic. Residues cysteine 358, histidine 409, and histidine 541 each coordinate Zn(2+).

The protein belongs to the class-II aminoacyl-tRNA synthetase family. In terms of assembly, homodimer. Zn(2+) is required as a cofactor.

It is found in the cytoplasm. The enzyme catalyses tRNA(Thr) + L-threonine + ATP = L-threonyl-tRNA(Thr) + AMP + diphosphate + H(+). In terms of biological role, catalyzes the attachment of threonine to tRNA(Thr) in a two-step reaction: L-threonine is first activated by ATP to form Thr-AMP and then transferred to the acceptor end of tRNA(Thr). Also edits incorrectly charged L-seryl-tRNA(Thr). The protein is Threonine--tRNA ligase of Nocardioides sp. (strain ATCC BAA-499 / JS614).